The primary structure comprises 324 residues: Beta-ketoacyl-[acyl-carrier-protein] synthase III (324 aa).

Residues Cys112 and His251 contribute to the active site. Residues 252 to 256 (QANLR) form an ACP-binding region. Asn281 is an active-site residue.

The protein belongs to the thiolase-like superfamily. FabH family. In terms of assembly, homodimer.

It is found in the cytoplasm. It carries out the reaction malonyl-[ACP] + acetyl-CoA + H(+) = 3-oxobutanoyl-[ACP] + CO2 + CoA. It functions in the pathway lipid metabolism; fatty acid biosynthesis. Functionally, catalyzes the condensation reaction of fatty acid synthesis by the addition to an acyl acceptor of two carbons from malonyl-ACP. Catalyzes the first condensation reaction which initiates fatty acid synthesis and may therefore play a role in governing the total rate of fatty acid production. Possesses both acetoacetyl-ACP synthase and acetyl transacylase activities. Its substrate specificity determines the biosynthesis of branched-chain and/or straight-chain of fatty acids. The protein is Beta-ketoacyl-[acyl-carrier-protein] synthase III of Clostridium perfringens (strain 13 / Type A).